The sequence spans 428 residues: Glutamate-1-semialdehyde 2,1-aminomutase 1 (428 aa).

An N6-(pyridoxal phosphate)lysine modification is found at lysine 268.

Belongs to the class-III pyridoxal-phosphate-dependent aminotransferase family. HemL subfamily. As to quaternary structure, homodimer. The cofactor is pyridoxal 5'-phosphate.

It is found in the cytoplasm. It catalyses the reaction (S)-4-amino-5-oxopentanoate = 5-aminolevulinate. The protein operates within porphyrin-containing compound metabolism; protoporphyrin-IX biosynthesis; 5-aminolevulinate from L-glutamyl-tRNA(Glu): step 2/2. This is Glutamate-1-semialdehyde 2,1-aminomutase 1 from Bacillus cereus (strain G9842).